A 397-amino-acid chain; its full sequence is Succinate--CoA ligase [ADP-forming] subunit beta (397 aa).

The region spanning 9–254 is the ATP-grasp domain; sequence KALLRSYGAP…ETEEDPKELA (246 aa). ATP-binding positions include K46, 53–55, E109, S112, and E117; that span reads GRG. Positions 209 and 223 each coordinate Mg(2+). Residues N274 and 331 to 333 contribute to the substrate site; that span reads GIM.

It belongs to the succinate/malate CoA ligase beta subunit family. In terms of assembly, heterotetramer of two alpha and two beta subunits. Requires Mg(2+) as cofactor.

It catalyses the reaction succinate + ATP + CoA = succinyl-CoA + ADP + phosphate. The enzyme catalyses GTP + succinate + CoA = succinyl-CoA + GDP + phosphate. It participates in carbohydrate metabolism; tricarboxylic acid cycle; succinate from succinyl-CoA (ligase route): step 1/1. Its function is as follows. Succinyl-CoA synthetase functions in the citric acid cycle (TCA), coupling the hydrolysis of succinyl-CoA to the synthesis of either ATP or GTP and thus represents the only step of substrate-level phosphorylation in the TCA. The beta subunit provides nucleotide specificity of the enzyme and binds the substrate succinate, while the binding sites for coenzyme A and phosphate are found in the alpha subunit. The sequence is that of Succinate--CoA ligase [ADP-forming] subunit beta from Cereibacter sphaeroides (strain ATCC 17029 / ATH 2.4.9) (Rhodobacter sphaeroides).